A 505-amino-acid chain; its full sequence is Hexose transporter 1 (505 aa).

The Cytoplasmic segment spans residues 1–27 (MNILRMDILSRGGTQEIEHRDGFFNTS). The chain crosses the membrane as a helical span at residues 28 to 48 (FQYVLSACLASFIFGYQVSVL). Residues 49–78 (NTIKSYIVVEFEWCSTKTDTSCEDSILKSS) lie on the Extracellular side of the membrane. Cys62 and Cys70 are joined by a disulfide. A helical transmembrane segment spans residues 79–99 (FLLASVFIGAVLGSGFSGYLV). Residues 100–104 (KFGRR) are Cytoplasmic-facing. A helical membrane pass occupies residues 105 to 125 (FSLMVIYIFFIFVSILTAISH). Over 126–134 (HFHTILYAR) the chain is Extracellular. The chain crosses the membrane as a helical span at residues 135–155 (LLSGFGIGLITVSVPMYISEM). The Cytoplasmic segment spans residues 156–165 (THKDKKGAYG). The chain crosses the membrane as a helical span at residues 166 to 186 (VLHQLFITFGIFVAVLLGLFL). Gln169 contributes to the alpha-D-glucose binding site. Beta-D-glucose is bound at residue Gln169. Over 187-208 (GDGPKINGKSIELSNFEMFWWR) the chain is Extracellular. A helical membrane pass occupies residues 209–229 (FMFFLPTIISLLGIILLIAFY). Topologically, residues 230-294 (KEETPYFLYE…SALKIPAYRN (65 aa)) are cytoplasmic. A helical transmembrane segment spans residues 295 to 315 (VIILGCILSGFQQFTGINVLV). Residues Gln306, Gln307, and Asn312 each coordinate alpha-D-glucose. Residue Gln306 participates in beta-D-glucose binding. Asn312 serves as a coordination point for beta-D-glucose. Topologically, residues 316–332 (ANSNELYKEFLDKNLIT) are extracellular. A helical transmembrane segment spans residues 333 to 353 (ILSVIMTAVNFLMTFPAIYII). Asn342 contributes to the beta-D-glucose binding site. The Cytoplasmic portion of the chain corresponds to 354 to 358 (EKIGR). A helical membrane pass occupies residues 359-379 (KTLLLGGCIGVICAFLPTVIA). The Extracellular segment spans residues 380–393 (RQVWGPTKIVNGLS). Residues 394 to 414 (IAGTFLMIISFAVSYGPVLWI) form a helical membrane-spanning segment. An alpha-D-glucose-binding site is contributed by Trp413. The Cytoplasmic segment spans residues 415–430 (YLHEMYPSEIKDSAAS). Residues 431 to 451 (LASLINWVCAIIVVFPSDIII) traverse the membrane as a helical segment. At 452–456 (KKSPS) the chain is on the extracellular side. The chain crosses the membrane as a helical span at residues 457 to 477 (ILFMFFSVMCIIAFLFIMFFI). Over 478–505 (KETKGGEIGTSPYISLEERQKHIGKSKV) the chain is Cytoplasmic.

It belongs to the major facilitator superfamily. Sugar transporter (TC 2.A.1.1) family. In terms of assembly, homodimer.

The protein localises to the cell membrane. It catalyses the reaction D-glucose(out) = D-glucose(in). It carries out the reaction D-fructose(out) = D-fructose(in). The enzyme catalyses D-galactose(in) = D-galactose(out). The catalysed reaction is D-mannose(out) = D-mannose(in). It catalyses the reaction D-glucosamine(out) = D-glucosamine(in). It carries out the reaction D-xylose(out) = D-xylose(in). With respect to regulation, inhibited by cytochalasin B. Functionally, sodium-independent facilitative hexose transporter. Can transport D-glucose and D-fructose. Can transport D-mannose, D-galactose, D-xylose and D-glucosamine. In Plasmodium yoelii yoelii, this protein is Hexose transporter 1.